We begin with the raw amino-acid sequence, 388 residues long: MSRLLFLWTVLNPQELEKNLSVFQYVSDEASLNALVAQYQQSPLLVLDTEFVRTRTYYAKLGLIQAYDGKTLALIDPVALPDLSAFWSLLDNPNIIKLVHSCSEDLEVFAHYGQRQPTPLFDSQIAASLCGMGHGLGYAKLVETCLGEVIDKGESRTDWMRRPLTEAQLSYAANDVLYLYQLYPQLADKLKAQDRLGWLYEEGERMTEGRLATPDMDTAYLRVKNAFQLTEHQLAYLKVLAKWRLEKALARDLALGFVIKDHGLIALAKKQPKSMGDLLKLNDLTEQEKRIHGKDILRVMQTADLSNPPELVDVLALKPGYKSAFKNIKTCLSELCEQHAIPMEMLGSKRHIHEYLQWRWDKQQGELPTVLSGWRGQIAAESLAKLDV.

The 3'-5' exonuclease domain maps to 24-191; sequence QYVSDEASLN…LYPQLADKLK (168 aa). Positions 230–310 constitute an HRDC domain; it reads TEHQLAYLKV…QTADLSNPPE (81 aa).

This sequence belongs to the RNase D family. Requires a divalent metal cation as cofactor.

It is found in the cytoplasm. It carries out the reaction Exonucleolytic cleavage that removes extra residues from the 3'-terminus of tRNA to produce 5'-mononucleotides.. Functionally, exonuclease involved in the 3' processing of various precursor tRNAs. Initiates hydrolysis at the 3'-terminus of an RNA molecule and releases 5'-mononucleotides. The polypeptide is Ribonuclease D (Shewanella sp. (strain ANA-3)).